A 340-amino-acid chain; its full sequence is Glyceraldehyde-3-phosphate dehydrogenase, cytosolic (340 aa).

NAD(+) contacts are provided by residues 16-17 (RI), Asp-38, and Arg-85. D-glyceraldehyde 3-phosphate-binding positions include 156-158 (SCT), Thr-187, 216-217 (TG), and Arg-239. Cys-157 functions as the Nucleophile in the catalytic mechanism. NAD(+) is bound at residue Asn-321.

Belongs to the glyceraldehyde-3-phosphate dehydrogenase family. In terms of assembly, homotetramer.

The protein resides in the cytoplasm. It catalyses the reaction D-glyceraldehyde 3-phosphate + phosphate + NAD(+) = (2R)-3-phospho-glyceroyl phosphate + NADH + H(+). It functions in the pathway carbohydrate degradation; glycolysis; pyruvate from D-glyceraldehyde 3-phosphate: step 1/5. In terms of biological role, key enzyme in glycolysis that catalyzes the first step of the pathway by converting D-glyceraldehyde 3-phosphate (G3P) into 3-phospho-D-glyceroyl phosphate. Essential for the maintenance of cellular ATP levels and carbohydrate metabolism. This chain is Glyceraldehyde-3-phosphate dehydrogenase, cytosolic, found in Ginkgo biloba (Ginkgo).